The primary structure comprises 522 residues: Maturase K (522 aa).

It belongs to the intron maturase 2 family. MatK subfamily.

The protein localises to the plastid. Its subcellular location is the chloroplast. In terms of biological role, usually encoded in the trnK tRNA gene intron. Probably assists in splicing its own and other chloroplast group II introns. In Dianella ensifolia (Flax lily), this protein is Maturase K.